The following is a 476-amino-acid chain: 3-isopropylmalate dehydratase large subunit (476 aa).

Positions 357, 417, and 420 each coordinate [4Fe-4S] cluster.

The protein belongs to the aconitase/IPM isomerase family. LeuC type 1 subfamily. In terms of assembly, heterodimer of LeuC and LeuD. [4Fe-4S] cluster serves as cofactor.

It catalyses the reaction (2R,3S)-3-isopropylmalate = (2S)-2-isopropylmalate. The protein operates within amino-acid biosynthesis; L-leucine biosynthesis; L-leucine from 3-methyl-2-oxobutanoate: step 2/4. Its function is as follows. Catalyzes the isomerization between 2-isopropylmalate and 3-isopropylmalate, via the formation of 2-isopropylmaleate. This chain is 3-isopropylmalate dehydratase large subunit, found in Mycobacterium leprae (strain TN).